The primary structure comprises 283 residues: Elongation factor Ts (283 aa).

Residues 80 to 83 (TDFV) are involved in Mg(2+) ion dislocation from EF-Tu.

The protein belongs to the EF-Ts family.

The protein resides in the cytoplasm. Functionally, associates with the EF-Tu.GDP complex and induces the exchange of GDP to GTP. It remains bound to the aminoacyl-tRNA.EF-Tu.GTP complex up to the GTP hydrolysis stage on the ribosome. This chain is Elongation factor Ts, found in Haemophilus influenzae (strain 86-028NP).